The chain runs to 552 residues: Thermosome subunit beta (552 aa).

Residues 531-552 form a disordered region; sequence AGKKGGSEPGGKKEKEEKSSED. A compositionally biased stretch (basic and acidic residues) spans 540 to 552; the sequence is GGKKEKEEKSSED.

Belongs to the TCP-1 chaperonin family. As to quaternary structure, forms a heterooligomeric complex of two stacked nine-membered rings; one of alpha and the other of beta subunits. Sometimes called a 'rosettasome'.

It localises to the cytoplasm. It catalyses the reaction ATP + H2O = ADP + phosphate + H(+). Molecular chaperone; binds unfolded polypeptides in vitro, stimulates protein folding and has ATPase activity. One of the most abundant proteins in the cell at all temperatures. This Saccharolobus shibatae (strain ATCC 51178 / DSM 5389 / JCM 8931 / NBRC 15437 / B12) (Sulfolobus shibatae) protein is Thermosome subunit beta (thsB).